The sequence spans 233 residues: Leucyl/phenylalanyl-tRNA--protein transferase (233 aa).

This sequence belongs to the L/F-transferase family.

Its subcellular location is the cytoplasm. It carries out the reaction N-terminal L-lysyl-[protein] + L-leucyl-tRNA(Leu) = N-terminal L-leucyl-L-lysyl-[protein] + tRNA(Leu) + H(+). It catalyses the reaction N-terminal L-arginyl-[protein] + L-leucyl-tRNA(Leu) = N-terminal L-leucyl-L-arginyl-[protein] + tRNA(Leu) + H(+). The catalysed reaction is L-phenylalanyl-tRNA(Phe) + an N-terminal L-alpha-aminoacyl-[protein] = an N-terminal L-phenylalanyl-L-alpha-aminoacyl-[protein] + tRNA(Phe). Its function is as follows. Functions in the N-end rule pathway of protein degradation where it conjugates Leu, Phe and, less efficiently, Met from aminoacyl-tRNAs to the N-termini of proteins containing an N-terminal arginine or lysine. The sequence is that of Leucyl/phenylalanyl-tRNA--protein transferase from Chromobacterium violaceum (strain ATCC 12472 / DSM 30191 / JCM 1249 / CCUG 213 / NBRC 12614 / NCIMB 9131 / NCTC 9757 / MK).